A 38-amino-acid polypeptide reads, in one-letter code: Photosystem II reaction center protein X (38 aa).

Residues 8–28 form a helical membrane-spanning segment; the sequence is FLWSLVAGAVVLGALFGAIIF.

This sequence belongs to the PsbX family. Type 1 subfamily. PSII is composed of 1 copy each of membrane proteins PsbA, PsbB, PsbC, PsbD, PsbE, PsbF, PsbH, PsbI, PsbJ, PsbK, PsbL, PsbM, PsbT, PsbX, PsbY, PsbZ, Psb30/Ycf12, peripheral proteins PsbO, CyanoQ (PsbQ), PsbU, PsbV and a large number of cofactors. It forms dimeric complexes.

The protein resides in the cellular thylakoid membrane. Its function is as follows. Involved in the binding and/or turnover of quinones at the Q(B) site of photosystem II (PSII). PSII is a light-driven water plastoquinone oxidoreductase, using light energy to abstract electrons from H(2)O, generating a proton gradient subsequently used for ATP formation. This Synechococcus sp. (strain JA-2-3B'a(2-13)) (Cyanobacteria bacterium Yellowstone B-Prime) protein is Photosystem II reaction center protein X.